The chain runs to 211 residues: Beta-crystallin B3 (211 aa).

Met1 carries the post-translational modification N-acetylmethionine. An N-acetylalanine; in Beta-crystallin B3, N-terminally processed modification is found at Ala2. The N-terminal arm stretch occupies residues 2 to 23 (AEQHSTPEQAAAGKSHGGLGGS). 2 consecutive Beta/gamma crystallin 'Greek key' domains span residues 24–63 (YKVIVYEMENFQGKRCELTAECPNLTESLLEKVGSIQVES) and 64–108 (GPWL…RPLH). The interval 109 to 113 (IDGPD) is connecting peptide. 2 consecutive Beta/gamma crystallin 'Greek key' domains span residues 114 to 155 (HKLH…RAIN) and 156 to 198 (GTWV…RRIR). Positions 200-211 (QKWHKRGVFLSS) are C-terminal arm.

The protein belongs to the beta/gamma-crystallin family. As to quaternary structure, homo/heterodimer, or complexes of higher-order. The structure of beta-crystallin oligomers seems to be stabilized through interactions between the N-terminal arms.

Functionally, crystallins are the dominant structural components of the vertebrate eye lens. The protein is Beta-crystallin B3 (CRYBB3) of Bos taurus (Bovine).